Reading from the N-terminus, the 229-residue chain is uncharacterized protein (229 aa).

7 helical membrane-spanning segments follow: residues 6–26, 36–56, 80–99, 114–134, 144–164, 174–194, and 207–224; these read LFFVSYVLYGLGFVSLIFLPT, LVSVIIGLIANYEMKFNILLA, SVYDVFCHTIMMMLCYHRIY, VLSVLFILGAMINCLVSHLII, IFEYTTIFQAVSTGYWVATML, FYYHWLLWITLMTTNWFIYKF, and YVEAVFIICTWYSGVLSS.

The protein belongs to the mimivirus L68/R809 family.

The protein localises to the membrane. This is an uncharacterized protein from Acanthamoeba polyphaga (Amoeba).